The chain runs to 376 residues: MTDLFKPLPEPPTELGRLRVLSKTAGIRVSPLILGGASIGDAWSGFMGSMNKEQAFELLDAFYEAGGNCIDTANSYQNEESEIWIGEWMASRKLRDQIVIATKFTGDYKKYEVGGGKSANYCGNHKRSLHVSVRDSLRKLQTDWIDILYIHWWDYMSSIEEVMDSLHILVQQGKVLYLGVSDTPAWVVSAANYYATSHGKTPFSVYQGKWNVLNRDFERDIIPMARHFGMALAPWDVMGGGRFQSKKAMEERKKNGEGLRTFVGGPEQTELEVKISEALTKIAEEHGTESVTAIAIAYVRSKAKNVFPLIGGRKIEHLKQNIEALSIKLTPEQIEYLESIVPFDVGFPKSLIGDDPAVTKKLSPLTSMSARIAFDN.

Tyrosine 76 serves as the catalytic Proton donor. Histidine 151 contributes to the substrate binding site. NADP(+) is bound at residue 236–246 (DVMGGGRFQSK).

It belongs to the aldo/keto reductase family. Aldo/keto reductase 2 subfamily.

This Saccharomyces cerevisiae (strain ATCC 204508 / S288c) (Baker's yeast) protein is Putative aryl-alcohol dehydrogenase AAD14 (AAD14).